The primary structure comprises 194 residues: Peptidyl-tRNA hydrolase (194 aa).

Residue Y17 participates in tRNA binding. H22 (proton acceptor) is an active-site residue. TRNA contacts are provided by F68, N70, and N116.

It belongs to the PTH family. As to quaternary structure, monomer.

The protein resides in the cytoplasm. The catalysed reaction is an N-acyl-L-alpha-aminoacyl-tRNA + H2O = an N-acyl-L-amino acid + a tRNA + H(+). Hydrolyzes ribosome-free peptidyl-tRNAs (with 1 or more amino acids incorporated), which drop off the ribosome during protein synthesis, or as a result of ribosome stalling. Functionally, catalyzes the release of premature peptidyl moieties from peptidyl-tRNA molecules trapped in stalled 50S ribosomal subunits, and thus maintains levels of free tRNAs and 50S ribosomes. The protein is Peptidyl-tRNA hydrolase of Shewanella woodyi (strain ATCC 51908 / MS32).